The following is a 520-amino-acid chain: Cytochrome P450 monooxygenase btcC (520 aa).

A helical transmembrane segment spans residues 2–22 (IFLLTLAGLKVLSIVILFGII). Residue N177 is glycosylated (N-linked (GlcNAc...) asparagine). Residue C448 participates in heme binding. An N-linked (GlcNAc...) asparagine glycan is attached at N511.

This sequence belongs to the cytochrome P450 family. Heme serves as cofactor.

It localises to the membrane. It functions in the pathway secondary metabolite biosynthesis; terpenoid biosynthesis. Functionally, cytochrome P4590 monooxygenase part of the gene cluster that mediates the biosynthesis of betaestacins. The bifunctional terpene synthase btcA converts isopentenyl diphosphate (IPP) and dimethylallyl diphosphate (DMAPP) into the sesterterpene betaestacin I. The C-terminal prenyltransferase (PT) domain of btcA catalyzes formation of GFPP, whereas the N-terminal terpene cyclase (TC) domain catalyzes the cyclization of GFPP into betaestacin I. The cytochrome P450 monooxygenase btcB oxidizes the C25 methyl group of betaestacin I to yield the carboxylic acid betaestacin IV via the alcohol betaestacin III. The cytochrome P450 monooxygenase btcC further catalyzes the multistep oxidation of betaestacin IV to produce several compounds, including betaestacins Va, Vb, Vc and VI. The chain is Cytochrome P450 monooxygenase btcC from Colletotrichum orbiculare (strain 104-T / ATCC 96160 / CBS 514.97 / LARS 414 / MAFF 240422) (Cucumber anthracnose fungus).